Consider the following 2133-residue polypeptide: Coagulation factor VIII (2133 aa).

The N-terminal stretch at 1-19 (MQLELSTCVFLCLLPLGFS) is a signal peptide. 4 consecutive Plastocyanin-like domains span residues 20–199 (AIRR…LLVC), 207–357 (ERTQ…QLRR), 399–573 (KTWV…LLIC), and 583–730 (NQMM…VYSC). 2 F5/8 type A domains span residues 20-357 (AIRR…QLRR) and 399-730 (KTWV…VYSC). C173 and C199 are joined by a disulfide. 2 N-linked (GlcNAc...) asparagine glycosylation sites follow: N233 and N259. A disulfide bridge links C547 with C573. An N-linked (GlcNAc...) asparagine glycan is attached at N601. Y737, Y738, and Y742 each carry sulfotyrosine. Disordered stretches follow at residues 760–790 (SFAQ…LDPQ) and 804–914 (PSGD…PHPQ). A b region spans residues 760-1599 (SFAQNSRPPS…LISYPDDQEQ (840 aa)). Residues 761–780 (FAQNSRPPSASQKQFQTITS) are compositionally biased toward polar residues. Basic and acidic residues-rich tracts occupy residues 853 to 862 (LRPELHHSAE) and 868 to 878 (EPEKELKKLDS). Low complexity predominate over residues 879–888 (KMSSSSDLLK). Positions 889 to 900 (TSPTIPSDTLSA) are enriched in polar residues. 3 N-linked (GlcNAc...) asparagine glycosylation sites follow: N929, N985, and N1025. The segment at 1042–1078 (LGKNPLSSERGPSPELLTSSGSGKSVKGQSSGQGRIR) is disordered. Residues 1060–1075 (SSGSGKSVKGQSSGQG) are compositionally biased toward low complexity. N-linked (GlcNAc...) asparagine glycosylation occurs at N1111. Residues 1160 to 1179 (PSVEGFDGGSHAPVPQDSRS) are disordered. N-linked (GlcNAc...) asparagine glycosylation is found at N1181, N1208, N1245, N1265, and N1335. The tract at residues 1200–1221 (EAPLEAPGNRTGPGPRSAVPRR) is disordered. Disordered stretches follow at residues 1358–1391 (LNKV…KSTA) and 1406–1441 (ESNH…APKP). The segment covering 1378 to 1387 (KEWESLEKSP) has biased composition (basic and acidic residues). N1408 and N1611 each carry an N-linked (GlcNAc...) asparagine glycan. 2 consecutive Plastocyanin-like domains span residues 1495–1659 (RTRH…LLIC) and 1669–1822 (GRQV…SKEC). One can recognise an F5/8 type A 3 domain in the interval 1495 to 1822 (RTRHYFIAAV…TTFLVYSKEC (328 aa)). Intrachain disulfides connect C1633–C1659, C1822–C1970, and C1975–C2127. F5/8 type C domains follow at residues 1822 to 1970 (CQAP…LMGC) and 1975 to 2127 (CSMP…VLGC). The N-linked (GlcNAc...) asparagine glycan is linked to N1919.

It belongs to the multicopper oxidase family. In terms of assembly, interacts with vWF. vWF binding is essential for the stabilization of F8 in circulation. In terms of processing, proteolytically cleaved by cathepsin CTSG to produce a partially activated form.

The protein localises to the secreted. Its subcellular location is the extracellular space. In terms of biological role, factor VIII, along with calcium and phospholipid, acts as a cofactor for factor IXa when it converts factor X to the activated form, factor Xa. The chain is Coagulation factor VIII (F8) from Sus scrofa (Pig).